Consider the following 475-residue polypeptide: Beta-amyrin 6-beta-monooxygenase (475 aa).

Residues 6 to 22 traverse the membrane as a helical segment; that stretch reads LYSLAFALVYISLYFIF. C423 is a heme binding site.

It belongs to the cytochrome P450 family. Requires heme as cofactor. In terms of tissue distribution, specifically expressed in roots.

Its subcellular location is the membrane. It carries out the reaction beta-amyrin + reduced [NADPH--hemoprotein reductase] + O2 = daturadiol + oxidized [NADPH--hemoprotein reductase] + H2O + H(+). Catalyzes the C-6 beta-hydroxylation of beta-amyrin to form daturadiol. Catalyzes the C-6 beta-hydroxylation of alpha-amyrin to form 6-beta-hydroxy-alpha-amyrin. This is Beta-amyrin 6-beta-monooxygenase from Solanum lycopersicum (Tomato).